A 411-amino-acid polypeptide reads, in one-letter code: 2,3-bisphosphoglycerate-independent phosphoglycerate mutase (411 aa).

The protein belongs to the BPG-independent phosphoglycerate mutase family. A-PGAM subfamily.

The enzyme catalyses (2R)-2-phosphoglycerate = (2R)-3-phosphoglycerate. The protein operates within carbohydrate degradation; glycolysis; pyruvate from D-glyceraldehyde 3-phosphate: step 3/5. Catalyzes the interconversion of 2-phosphoglycerate and 3-phosphoglycerate. The polypeptide is 2,3-bisphosphoglycerate-independent phosphoglycerate mutase (Methanosphaerula palustris (strain ATCC BAA-1556 / DSM 19958 / E1-9c)).